A 699-amino-acid polypeptide reads, in one-letter code: Polyribonucleotide nucleotidyltransferase (699 aa).

Residues aspartate 485 and aspartate 491 each contribute to the Mg(2+) site. The 60-residue stretch at 552–611 folds into the KH domain; it reads PRITTIKINPEKIRDVIGKGGAVIRALTEETGTTIELEDDGTVKIASSNGEATKEAIRRI. The S1 motif domain maps to 621-689; sequence GRIYNGKVIR…RQGRVRLSIK (69 aa).

It belongs to the polyribonucleotide nucleotidyltransferase family. As to quaternary structure, component of the RNA degradosome, which is a multiprotein complex involved in RNA processing and mRNA degradation. The cofactor is Mg(2+).

It is found in the cytoplasm. The catalysed reaction is RNA(n+1) + phosphate = RNA(n) + a ribonucleoside 5'-diphosphate. In terms of biological role, involved in mRNA degradation. Catalyzes the phosphorolysis of single-stranded polyribonucleotides processively in the 3'- to 5'-direction. This chain is Polyribonucleotide nucleotidyltransferase, found in Shewanella sp. (strain MR-7).